The sequence spans 132 residues: Cliotide T2 (132 aa).

The N-terminal stretch at 1–28 (MAYVRLTSLAVLFFLAASVMLNVKKTEG) is a signal peptide. Residues 29 to 58 (GEFLKCGESCVQGECYTPGCSCDWPICKKN) constitute a cross-link (cyclopeptide (Gly-Asn)). 3 disulfide bridges follow: Cys-34/Cys-48, Cys-38/Cys-50, and Cys-43/Cys-55. Residues 59–132 (HIIATNAKTV…NLKMPMTIIN (74 aa)) constitute a propeptide, removed in mature form.

This is a cyclic peptide. In terms of tissue distribution, expressed in flower, stem, shoot and pod but not in root, leaf, seed and nodule (at protein level).

Its function is as follows. Probably participates in a plant defense mechanism. Not active against Gram-negative bacteria E.coli ATCC 700926, K.pneumoniae ATTC 13883 and P.aeruginosa ATCC 39018 at concentration up to 100 uM. Has cytotoxic but no hemolytic activity. The sequence is that of Cliotide T2 from Clitoria ternatea (Butterfly pea).